The chain runs to 203 residues: MREAMQLVPMVIEQSSRGERSFDIYSRLLRERIIFLNGEVNDTVSALVCAQLLFLEAENSKKPINLYINSPGGVVTSGLAMYDTMRFIRAPVHTLCMGTARSMGSFLLMAGEAGGRAALPNASILIHQPSGGFQGQASDMMIHAEEILKTKQRMTRLYAEHCGRSYEDFERGMDRDRFMTAEEALEWGLIDRILTVREGEIPD.

Ser-102 (nucleophile) is an active-site residue. His-127 is an active-site residue.

This sequence belongs to the peptidase S14 family. As to quaternary structure, fourteen ClpP subunits assemble into 2 heptameric rings which stack back to back to give a disk-like structure with a central cavity, resembling the structure of eukaryotic proteasomes.

It is found in the cytoplasm. It carries out the reaction Hydrolysis of proteins to small peptides in the presence of ATP and magnesium. alpha-casein is the usual test substrate. In the absence of ATP, only oligopeptides shorter than five residues are hydrolyzed (such as succinyl-Leu-Tyr-|-NHMec, and Leu-Tyr-Leu-|-Tyr-Trp, in which cleavage of the -Tyr-|-Leu- and -Tyr-|-Trp bonds also occurs).. Functionally, cleaves peptides in various proteins in a process that requires ATP hydrolysis. Has a chymotrypsin-like activity. Plays a major role in the degradation of misfolded proteins. This chain is ATP-dependent Clp protease proteolytic subunit 1, found in Rhizobium johnstonii (strain DSM 114642 / LMG 32736 / 3841) (Rhizobium leguminosarum bv. viciae).